We begin with the raw amino-acid sequence, 1390 residues long: MAERANLFFHNKVIDGTAIKRIISRFIDHFGMAYTSHILDQVKTLGFHQATATSISLGIDDLLTIPSKGWLVQDAEQQSLILEKHHHYGNVHAIEKLRQSIEIWYATSEYLRQEMNPNFRMTEPFNPVHIMSFSGARGNASQVHQLVGMRGLMSDPQGQMIDLPIQSNLREGLSLTEYIISCYGARKGVVDTAVRTSDAGYLTRRLVEVVQHIVVRRTDCGTTRGISVSSRNGMIPERIFIQTLIGRVLADNIYMGLRCIATRNQDIGIGLVNRFITFRTQPISIRTPFTCRSTSWICRLCYGRSPTHGDLVELGEAVGIIAGQSIGEPGTQLTLRTFHTGGVFTGGTAEHVRAPSNGKIKFNKGLVHPTRTRHGHPAFLCSMDLYVTIESQDIIHNVTIPPKSFLLVQNDQYVESEQVIAEIRSGTYTLNFTERVRKHIYSDSEGEMHWSTDVYHASEFTYSNVHLLPKTSHLWILSGGSCRSSIVPFSLHKDQDQINVHSLSVERGYISNPSENNDKVKHKFFSSYLSSKSKKKSRILDYSDLNRIICTGFIYPTILHENSDLLAKRRKNRFIIPFQSIQEKELMSHSDILIEIPINGIFRRNSIFAYFDDPQYRRKSSGITKYVAIGVHSIVKKEDLVEYRGVKEFQPKYQMKVDRFFFIPEEVYILPESSSLMVRNNSIIGVDTQITLNTKSRVGGLIRIERKKKKMELKIFSGDIHFPRATDKISRYSGILIPPGTVKTNSKESKKVKNWIYVQRITPTKKKSFVLVRPVLIYERGDGINLERLFPPDLLQEKENLKLRIVNYILYGNGKPIQGISNTSIQLVRTCLVLNWNQDKKSSSIEEARVYFVEVSINGLIRDFLRIHLGKSRISYISRKRNDPSGLGLISDNGPDRTNINPFYSIYSKTRIPQSLKQNQGTISISTLLNRNMECQSLIILSSSNCFRMDPSNGVKSYNVIKESTKRDPIIPIRNLLGPLGTTLQIANFYSFYHLLTHNQISVIKYLKLDNLKLKQTSKVLKYYLMDENGRIVNHDPYSNNVLNPFKLNWYFLHHNYHHNYCEETFTIINLGQFICENVCMTKNGPRLKSGQVLIVHADSVILRLAKPYLATPGATVHGHYGEILYEGDTLVTFIYEKSRSGDITQGLPKVEQVLEVRSIDSISINLEKRVENWNECITRIVGIPWGFLIGAELTIVQSRISLVNKIQKVYRSQGVQIHNRHIEIIVRQITSKVLVSEDGMSNVFSPGELIGLLRAERAMRALEEAICYRTVFLGITRASLSTQSFISEASFQETARVLAKAALRGRIDWLKGLKENVVLGGMIPVGTGFKGLAHRSSQHKIIPFKIKKKNLFAGEMRDILFHHRELFDSCISKNFYNISEQSFIGFNDS.

4 residues coordinate Zn(2+): Cys220, Cys291, Cys298, and Cys301.

It belongs to the RNA polymerase beta' chain family. RpoC2 subfamily. In terms of assembly, in plastids the minimal PEP RNA polymerase catalytic core is composed of four subunits: alpha, beta, beta', and beta''. When a (nuclear-encoded) sigma factor is associated with the core the holoenzyme is formed, which can initiate transcription. It depends on Zn(2+) as a cofactor.

The protein resides in the plastid. Its subcellular location is the chloroplast. It catalyses the reaction RNA(n) + a ribonucleoside 5'-triphosphate = RNA(n+1) + diphosphate. DNA-dependent RNA polymerase catalyzes the transcription of DNA into RNA using the four ribonucleoside triphosphates as substrates. This Populus alba (White poplar) protein is DNA-directed RNA polymerase subunit beta''.